The following is a 72-amino-acid chain: Translation initiation factor IF-1 (72 aa).

Residues 1-72 form the S1-like domain; sequence MSKEGKITLK…TRGRIIYRIS (72 aa).

It belongs to the IF-1 family. As to quaternary structure, component of the 30S ribosomal translation pre-initiation complex which assembles on the 30S ribosome in the order IF-2 and IF-3, IF-1 and N-formylmethionyl-tRNA(fMet); mRNA recruitment can occur at any time during PIC assembly.

The protein resides in the cytoplasm. One of the essential components for the initiation of protein synthesis. Stabilizes the binding of IF-2 and IF-3 on the 30S subunit to which N-formylmethionyl-tRNA(fMet) subsequently binds. Helps modulate mRNA selection, yielding the 30S pre-initiation complex (PIC). Upon addition of the 50S ribosomal subunit IF-1, IF-2 and IF-3 are released leaving the mature 70S translation initiation complex. The polypeptide is Translation initiation factor IF-1 (Malacoplasma penetrans (strain HF-2) (Mycoplasma penetrans)).